We begin with the raw amino-acid sequence, 336 residues long: Glycerol-3-phosphate dehydrogenase [NAD(P)+] (336 aa).

Residues W16 and K109 each coordinate NADPH. The sn-glycerol 3-phosphate site is built by K109, G137, and S139. A141 lines the NADPH pocket. Positions 192, 245, 255, 256, and 257 each coordinate sn-glycerol 3-phosphate. The active-site Proton acceptor is K192. R256 is a binding site for NADPH. NADPH is bound by residues V280 and E282.

Belongs to the NAD-dependent glycerol-3-phosphate dehydrogenase family.

Its subcellular location is the cytoplasm. The enzyme catalyses sn-glycerol 3-phosphate + NAD(+) = dihydroxyacetone phosphate + NADH + H(+). It catalyses the reaction sn-glycerol 3-phosphate + NADP(+) = dihydroxyacetone phosphate + NADPH + H(+). The protein operates within membrane lipid metabolism; glycerophospholipid metabolism. In terms of biological role, catalyzes the reduction of the glycolytic intermediate dihydroxyacetone phosphate (DHAP) to sn-glycerol 3-phosphate (G3P), the key precursor for phospholipid synthesis. The protein is Glycerol-3-phosphate dehydrogenase [NAD(P)+] of Hyphomonas neptunium (strain ATCC 15444).